A 451-amino-acid chain; its full sequence is Bifunctional protein GlmU (451 aa).

Residues 1–229 are pyrophosphorylase; sequence MQRHAIILAA…FDEIIGVNDR (229 aa). UDP-N-acetyl-alpha-D-glucosamine is bound by residues 8–11, Lys22, Gln72, and 77–78; these read LAAG and GT. Residue Asp102 participates in Mg(2+) binding. Positions 139, 154, and 227 each coordinate UDP-N-acetyl-alpha-D-glucosamine. Asn227 contributes to the Mg(2+) binding site. The segment at 230–250 is linker; that stretch reads LMLSEAEKALQQRINRYHMEN. An N-acetyltransferase region spans residues 251 to 451; the sequence is GVTIIDPSST…QVNKEGYLKK (201 aa). Positions 332 and 350 each coordinate UDP-N-acetyl-alpha-D-glucosamine. The active-site Proton acceptor is His362. The UDP-N-acetyl-alpha-D-glucosamine site is built by Tyr365 and Asn376. Residues 385 to 386, Ala422, and Arg439 each bind acetyl-CoA; that span reads NY.

This sequence in the N-terminal section; belongs to the N-acetylglucosamine-1-phosphate uridyltransferase family. It in the C-terminal section; belongs to the transferase hexapeptide repeat family. In terms of assembly, homotrimer. Requires Mg(2+) as cofactor.

The protein localises to the cytoplasm. The catalysed reaction is alpha-D-glucosamine 1-phosphate + acetyl-CoA = N-acetyl-alpha-D-glucosamine 1-phosphate + CoA + H(+). It catalyses the reaction N-acetyl-alpha-D-glucosamine 1-phosphate + UTP + H(+) = UDP-N-acetyl-alpha-D-glucosamine + diphosphate. The protein operates within nucleotide-sugar biosynthesis; UDP-N-acetyl-alpha-D-glucosamine biosynthesis; N-acetyl-alpha-D-glucosamine 1-phosphate from alpha-D-glucosamine 6-phosphate (route II): step 2/2. It participates in nucleotide-sugar biosynthesis; UDP-N-acetyl-alpha-D-glucosamine biosynthesis; UDP-N-acetyl-alpha-D-glucosamine from N-acetyl-alpha-D-glucosamine 1-phosphate: step 1/1. Its pathway is bacterial outer membrane biogenesis; LPS lipid A biosynthesis. In terms of biological role, catalyzes the last two sequential reactions in the de novo biosynthetic pathway for UDP-N-acetylglucosamine (UDP-GlcNAc). The C-terminal domain catalyzes the transfer of acetyl group from acetyl coenzyme A to glucosamine-1-phosphate (GlcN-1-P) to produce N-acetylglucosamine-1-phosphate (GlcNAc-1-P), which is converted into UDP-GlcNAc by the transfer of uridine 5-monophosphate (from uridine 5-triphosphate), a reaction catalyzed by the N-terminal domain. In Staphylococcus epidermidis (strain ATCC 35984 / DSM 28319 / BCRC 17069 / CCUG 31568 / BM 3577 / RP62A), this protein is Bifunctional protein GlmU.